A 364-amino-acid chain; its full sequence is UDP-N-acetylglucosamine--N-acetylmuramyl-(pentapeptide) pyrophosphoryl-undecaprenol N-acetylglucosamine transferase (364 aa).

Residues Thr-10–Gly-12, Asn-128, Arg-170, Ser-199, Ile-250, and Gln-295 each bind UDP-N-acetyl-alpha-D-glucosamine.

It belongs to the glycosyltransferase 28 family. MurG subfamily.

It is found in the cell inner membrane. The enzyme catalyses di-trans,octa-cis-undecaprenyl diphospho-N-acetyl-alpha-D-muramoyl-L-alanyl-D-glutamyl-meso-2,6-diaminopimeloyl-D-alanyl-D-alanine + UDP-N-acetyl-alpha-D-glucosamine = di-trans,octa-cis-undecaprenyl diphospho-[N-acetyl-alpha-D-glucosaminyl-(1-&gt;4)]-N-acetyl-alpha-D-muramoyl-L-alanyl-D-glutamyl-meso-2,6-diaminopimeloyl-D-alanyl-D-alanine + UDP + H(+). It participates in cell wall biogenesis; peptidoglycan biosynthesis. Functionally, cell wall formation. Catalyzes the transfer of a GlcNAc subunit on undecaprenyl-pyrophosphoryl-MurNAc-pentapeptide (lipid intermediate I) to form undecaprenyl-pyrophosphoryl-MurNAc-(pentapeptide)GlcNAc (lipid intermediate II). The polypeptide is UDP-N-acetylglucosamine--N-acetylmuramyl-(pentapeptide) pyrophosphoryl-undecaprenol N-acetylglucosamine transferase (Chlorobium limicola (strain DSM 245 / NBRC 103803 / 6330)).